A 426-amino-acid polypeptide reads, in one-letter code: C4-dicarboxylate transport protein (426 aa).

8 helical membrane-spanning segments follow: residues Ser4 to Gly24, Leu44 to Met64, Ile76 to Val96, Ile142 to Phe162, Val184 to Met204, Leu222 to Ala242, Ile326 to Val346, and Ile352 to Ile372.

This sequence belongs to the dicarboxylate/amino acid:cation symporter (DAACS) (TC 2.A.23) family.

It localises to the cell inner membrane. Responsible for the transport of dicarboxylates such as succinate, fumarate, and malate from the periplasm across the membrane. The polypeptide is C4-dicarboxylate transport protein (Edwardsiella ictaluri (strain 93-146)).